The following is a 140-amino-acid chain: Large ribosomal subunit protein uL11 (140 aa).

This sequence belongs to the universal ribosomal protein uL11 family. In terms of assembly, part of the ribosomal stalk of the 50S ribosomal subunit. Interacts with L10 and the large rRNA to form the base of the stalk. L10 forms an elongated spine to which L12 dimers bind in a sequential fashion forming a multimeric L10(L12)X complex. Post-translationally, one or more lysine residues are methylated.

Forms part of the ribosomal stalk which helps the ribosome interact with GTP-bound translation factors. The polypeptide is Large ribosomal subunit protein uL11 (Syntrophotalea carbinolica (strain DSM 2380 / NBRC 103641 / GraBd1) (Pelobacter carbinolicus)).